A 395-amino-acid polypeptide reads, in one-letter code: Elongation factor Tu (395 aa).

In terms of domain architecture, tr-type G spans 10–204; that stretch reads KPHVNIGTIG…AVDSYIPTPE (195 aa). Positions 19–26 are G1; sequence GHVDHGKT. 19–26 serves as a coordination point for GTP; it reads GHVDHGKT. Position 26 (T26) interacts with Mg(2+). A G2 region spans residues 60–64; sequence GITIS. The segment at 81-84 is G3; the sequence is DCPG. GTP-binding positions include 81-85 and 136-139; these read DCPGH and NKCD. Positions 136–139 are G4; sequence NKCD. The segment at 174-176 is G5; that stretch reads SAL.

Belongs to the TRAFAC class translation factor GTPase superfamily. Classic translation factor GTPase family. EF-Tu/EF-1A subfamily. As to quaternary structure, monomer.

The protein localises to the cytoplasm. The enzyme catalyses GTP + H2O = GDP + phosphate + H(+). In terms of biological role, GTP hydrolase that promotes the GTP-dependent binding of aminoacyl-tRNA to the A-site of ribosomes during protein biosynthesis. In Listeria monocytogenes serotype 4b (strain CLIP80459), this protein is Elongation factor Tu.